Here is a 302-residue protein sequence, read N- to C-terminus: Sulfate adenylyltransferase subunit 2 (302 aa).

Belongs to the PAPS reductase family. CysD subfamily. Heterodimer composed of CysD, the smaller subunit, and CysN.

It carries out the reaction sulfate + ATP + H(+) = adenosine 5'-phosphosulfate + diphosphate. Its pathway is sulfur metabolism; hydrogen sulfide biosynthesis; sulfite from sulfate: step 1/3. In terms of biological role, with CysN forms the ATP sulfurylase (ATPS) that catalyzes the adenylation of sulfate producing adenosine 5'-phosphosulfate (APS) and diphosphate, the first enzymatic step in sulfur assimilation pathway. APS synthesis involves the formation of a high-energy phosphoric-sulfuric acid anhydride bond driven by GTP hydrolysis by CysN coupled to ATP hydrolysis by CysD. This is Sulfate adenylyltransferase subunit 2 from Escherichia coli O6:K15:H31 (strain 536 / UPEC).